Here is a 396-residue protein sequence, read N- to C-terminus: Elongation factor Tu (396 aa).

One can recognise a tr-type G domain in the interval 10 to 206 (KPHVNVGTIG…ALDTYIPTPE (197 aa)). The interval 19–26 (GHVDHGKT) is G1. 19-26 (GHVDHGKT) contacts GTP. Position 26 (threonine 26) interacts with Mg(2+). The G2 stretch occupies residues 60–64 (GITIN). The segment at 81 to 84 (DCPG) is G3. Residues 81-85 (DCPGH) and 136-139 (NKAD) contribute to the GTP site. The interval 136–139 (NKAD) is G4. Residues 174 to 176 (SAK) are G5.

Belongs to the TRAFAC class translation factor GTPase superfamily. Classic translation factor GTPase family. EF-Tu/EF-1A subfamily. As to quaternary structure, monomer.

It is found in the cytoplasm. It catalyses the reaction GTP + H2O = GDP + phosphate + H(+). Functionally, GTP hydrolase that promotes the GTP-dependent binding of aminoacyl-tRNA to the A-site of ribosomes during protein biosynthesis. In Bordetella bronchiseptica (strain ATCC BAA-588 / NCTC 13252 / RB50) (Alcaligenes bronchisepticus), this protein is Elongation factor Tu.